A 146-amino-acid polypeptide reads, in one-letter code: Large ribosomal subunit protein uL15 (146 aa).

The disordered stretch occupies residues 1–45 (MTIKLHHLRPAPGSKTERTRVGRGEGSKGKTAGRGTKGTKARKNV). Basic and acidic residues predominate over residues 15-28 (KTERTRVGRGEGSK).

It belongs to the universal ribosomal protein uL15 family. Part of the 50S ribosomal subunit.

Binds to the 23S rRNA. The protein is Large ribosomal subunit protein uL15 of Mycobacteroides abscessus (strain ATCC 19977 / DSM 44196 / CCUG 20993 / CIP 104536 / JCM 13569 / NCTC 13031 / TMC 1543 / L948) (Mycobacterium abscessus).